We begin with the raw amino-acid sequence, 288 residues long: B3 domain-containing protein At2g35310 (288 aa).

2 consecutive DNA-binding regions (TF-B3) follow at residues 19 to 114 and 196 to 288; these read FFKV…FMQD and AEFS…VSKP.

The protein resides in the nucleus. The polypeptide is B3 domain-containing protein At2g35310 (Arabidopsis thaliana (Mouse-ear cress)).